A 548-amino-acid polypeptide reads, in one-letter code: Probable malate:quinone oxidoreductase (548 aa).

Belongs to the MQO family. The cofactor is FAD.

The catalysed reaction is (S)-malate + a quinone = a quinol + oxaloacetate. Its pathway is carbohydrate metabolism; tricarboxylic acid cycle; oxaloacetate from (S)-malate (quinone route): step 1/1. The sequence is that of Probable malate:quinone oxidoreductase from Escherichia coli (strain SE11).